We begin with the raw amino-acid sequence, 122 residues long: Small ribosomal subunit protein uS13 (122 aa).

A disordered region spans residues N95–K122.

It belongs to the universal ribosomal protein uS13 family. As to quaternary structure, part of the 30S ribosomal subunit. Forms a loose heterodimer with protein S19. Forms two bridges to the 50S subunit in the 70S ribosome.

In terms of biological role, located at the top of the head of the 30S subunit, it contacts several helices of the 16S rRNA. In the 70S ribosome it contacts the 23S rRNA (bridge B1a) and protein L5 of the 50S subunit (bridge B1b), connecting the 2 subunits; these bridges are implicated in subunit movement. Contacts the tRNAs in the A and P-sites. This Methylobacterium sp. (strain 4-46) protein is Small ribosomal subunit protein uS13.